The primary structure comprises 406 residues: Tryptophan 2,3-dioxygenase (406 aa).

Serine 19 is modified (phosphoserine). Residues 72-76 and arginine 144 contribute to the substrate site; that span reads FIITH. Histidine 328 provides a ligand contact to heme. Threonine 342 contacts substrate.

Belongs to the tryptophan 2,3-dioxygenase family. As to quaternary structure, homotetramer. Dimer of dimers. Heme is required as a cofactor.

The catalysed reaction is L-tryptophan + O2 = N-formyl-L-kynurenine. It functions in the pathway amino-acid degradation; L-tryptophan degradation via kynurenine pathway; L-kynurenine from L-tryptophan: step 1/2. Functionally, heme-dependent dioxygenase that catalyzes the oxidative cleavage of the L-tryptophan (L-Trp) pyrrole ring and converts L-tryptophan to N-formyl-L-kynurenine. Catalyzes the oxidative cleavage of the indole moiety. The chain is Tryptophan 2,3-dioxygenase from Bos taurus (Bovine).